We begin with the raw amino-acid sequence, 553 residues long: Membrane protein insertase YidC (553 aa).

Residues 6–26 (LIALVLSLLVLVFWEMYFGLF) form a helical membrane-spanning segment. The segment at 34 to 59 (NKTEQAAPTTTQPATPQTVPPQAATP) is disordered. Over residues 38–59 (QAAPTTTQPATPQTVPPQAATP) the composition is skewed to low complexity. The next 5 membrane-spanning stretches (helical) occupy residues 331–351 (LASAVDYGWFTFIAKPLVYVL), 360–380 (NWGVAIILLTIVIKILFWPLT), 424–444 (VNPMGGCLPMLLQIPVFFALY), 477–497 (IPYLGGLPVLTLLMGITMFIQ), and 512–532 (IMMIMPVMFTVFFVNFPSGLV).

Belongs to the OXA1/ALB3/YidC family. Type 1 subfamily. Interacts with the Sec translocase complex via SecD. Specifically interacts with transmembrane segments of nascent integral membrane proteins during membrane integration.

The protein localises to the cell inner membrane. Functionally, required for the insertion and/or proper folding and/or complex formation of integral membrane proteins into the membrane. Involved in integration of membrane proteins that insert both dependently and independently of the Sec translocase complex, as well as at least some lipoproteins. Aids folding of multispanning membrane proteins. The polypeptide is Membrane protein insertase YidC (Syntrophobacter fumaroxidans (strain DSM 10017 / MPOB)).